Here is a 464-residue protein sequence, read N- to C-terminus: tRNA modification GTPase MnmE (464 aa).

(6S)-5-formyl-5,6,7,8-tetrahydrofolate is bound by residues Arg-29, Glu-91, and Arg-131. The TrmE-type G domain maps to 226–387; sequence GLKVALTGKP…LINYLLKKCG (162 aa). Asn-236 contacts K(+). Residues 236–241, 255–261, and 280–283 contribute to the GTP site; these read NVGKSS, TDLPGTT, and DTAG. Residue Ser-240 participates in Mg(2+) binding. Positions 255, 257, and 260 each coordinate K(+). Thr-261 contributes to the Mg(2+) binding site. Lys-464 serves as a coordination point for (6S)-5-formyl-5,6,7,8-tetrahydrofolate.

Belongs to the TRAFAC class TrmE-Era-EngA-EngB-Septin-like GTPase superfamily. TrmE GTPase family. Homodimer. Heterotetramer of two MnmE and two MnmG subunits. K(+) is required as a cofactor.

It is found in the cytoplasm. In terms of biological role, exhibits a very high intrinsic GTPase hydrolysis rate. Involved in the addition of a carboxymethylaminomethyl (cmnm) group at the wobble position (U34) of certain tRNAs, forming tRNA-cmnm(5)s(2)U34. The chain is tRNA modification GTPase MnmE from Prochlorococcus marinus (strain NATL2A).